The following is a 256-amino-acid chain: Cell division protein DivIB (256 aa).

Over 1-23 (MSKDLISTDEYIKIKKKRKRIKK) the chain is Cytoplasmic. A helical transmembrane segment spans residues 24 to 44 (IVVLFIFLISILVTLCLKIPY). In terms of domain architecture, POTRA spans 45-113 (FNIESIEIKG…NKLEIYVKER (69 aa)). Residues 45–256 (FNIESIEIKG…EGNPVFYIEK (212 aa)) are Extracellular-facing.

The protein belongs to the FtsQ/DivIB family. DivIB subfamily.

It localises to the cell membrane. Functionally, cell division protein that may be involved in stabilizing or promoting the assembly of the division complex. The sequence is that of Cell division protein DivIB from Clostridium botulinum (strain Loch Maree / Type A3).